Here is a 143-residue protein sequence, read N- to C-terminus: Deoxyuridine 5'-triphosphate nucleotidohydrolase (143 aa).

The protein belongs to the dUTPase family. Mg(2+) is required as a cofactor.

The enzyme catalyses dUTP + H2O = dUMP + diphosphate + H(+). Its function is as follows. This enzyme is involved in nucleotide metabolism: it produces dUMP, the immediate precursor of thymidine nucleotides and it decreases the intracellular concentration of dUTP so that uracil cannot be incorporated into DNA. This Yaba monkey tumor virus (strain VR587) (YMTV) protein is Deoxyuridine 5'-triphosphate nucleotidohydrolase (DUT).